A 189-amino-acid chain; its full sequence is DnaJ homolog subfamily C member 5G (189 aa).

The J domain occupies 17–98; that stretch reads SLYAVLDLKK…KKRKIYDQHG (82 aa). Positions 154–189 are disordered; sequence PEQDSGRKYQQNVQSQPPRSGAKCDFRSEENSEDDF. Residues 161–171 are compositionally biased toward polar residues; it reads KYQQNVQSQPP.

Palmitoylated. In terms of tissue distribution, testis specific.

It localises to the membrane. The protein is DnaJ homolog subfamily C member 5G (DNAJC5G) of Homo sapiens (Human).